The sequence spans 335 residues: MLSMKVAVLGAGAWGTALAAHLAVRHDTLLWARDAALVAELAARRENARYLGGVALPPGLRYEADLATALSHAQADDALCVIAAPVAGLRALCRAMRDARRVPAHFVWVCKGFEADTRRLPHQMVAEELPDHASYGVLSGPSFAREVAQGLPVALTVASASAACRERTLAAFHHGAMRIYTGDDVVGVEVGGAVKNVLAIATGIADGLGLGLNARAALVTRGLAEMSRLGVALGGRAETFTGLTGLGDLILTATGDLSRNRSVGLQLAAGRSLDDILAALGHVAEGVRCARAVLSIARERGVDMPITEAVCAVLFDGVAPRDAVSGLLRRDAKAE.

The NADPH site is built by Trp-14, Arg-33, and Lys-111. Sn-glycerol 3-phosphate contacts are provided by Lys-111, Gly-140, and Ser-142. Ala-144 serves as a coordination point for NADPH. Sn-glycerol 3-phosphate contacts are provided by Lys-195, Asp-248, Ser-258, Arg-259, and Asn-260. Lys-195 (proton acceptor) is an active-site residue. Residue Arg-259 coordinates NADPH. NADPH is bound by residues Val-283 and Glu-285.

It belongs to the NAD-dependent glycerol-3-phosphate dehydrogenase family.

The protein resides in the cytoplasm. It carries out the reaction sn-glycerol 3-phosphate + NAD(+) = dihydroxyacetone phosphate + NADH + H(+). The catalysed reaction is sn-glycerol 3-phosphate + NADP(+) = dihydroxyacetone phosphate + NADPH + H(+). It functions in the pathway membrane lipid metabolism; glycerophospholipid metabolism. Its function is as follows. Catalyzes the reduction of the glycolytic intermediate dihydroxyacetone phosphate (DHAP) to sn-glycerol 3-phosphate (G3P), the key precursor for phospholipid synthesis. This Burkholderia mallei (strain NCTC 10247) protein is Glycerol-3-phosphate dehydrogenase [NAD(P)+].